The chain runs to 429 residues: Histidine--tRNA ligase (429 aa).

It belongs to the class-II aminoacyl-tRNA synthetase family. Homodimer.

The protein resides in the cytoplasm. The catalysed reaction is tRNA(His) + L-histidine + ATP = L-histidyl-tRNA(His) + AMP + diphosphate + H(+). The protein is Histidine--tRNA ligase of Prochlorococcus marinus (strain MIT 9515).